A 376-amino-acid polypeptide reads, in one-letter code: uncharacterized protein (376 aa).

Ser-59 is subject to Phosphoserine. The Rho-GAP domain occupies 139 to 367 (VAIEITVQRQ…CLIEHHNAIF (229 aa)). The disordered stretch occupies residues 307-338 (RPSRSPKKSNDFETATPWDLLSDEGEGPDASS).

This is an uncharacterized protein from Arabidopsis thaliana (Mouse-ear cress).